The following is a 478-amino-acid chain: Pyrrolysine--tRNA ligase (478 aa).

Residues 106–188 (VMPKSVARTP…TSAMPASTSA (83 aa)) form a disordered region. Residues 122–132 (APVQTLPSESQ) are compositionally biased toward polar residues. Residues 133–188 (PAPTTPISASTTAPASTSTTAPAPASTTAPAPASTTAPASASTTISTSAMPASTSA) show a composition bias toward low complexity.

It belongs to the class-II aminoacyl-tRNA synthetase family.

The protein localises to the cytoplasm. The enzyme catalyses tRNA(Pyl) + L-pyrrolysine + ATP = L-pyrrolysyl-tRNA(Pyl) + AMP + diphosphate. Functionally, catalyzes the attachment of pyrrolysine to tRNA(Pyl). Pyrrolysine is a lysine derivative encoded by the termination codon UAG. This chain is Pyrrolysine--tRNA ligase, found in Methanosarcina thermophila.